The chain runs to 529 residues: Inosine-5'-monophosphate dehydrogenase (529 aa).

CBS domains are found at residues 129–185 and 189–246; these read MVTD…SKQV and MTKT…PLAT. NAD(+)-binding positions include D283 and 334–336; that span reads GVG. Positions 336 and 338 each coordinate K(+). Residue S339 coordinates IMP. Residue C341 participates in K(+) binding. C341 serves as the catalytic Thioimidate intermediate. IMP-binding positions include 374 to 376, 397 to 398, and 421 to 425; these read DGG, GS, and YRGMG. R443 acts as the Proton acceptor in catalysis. E458 is a binding site for IMP. E511, S512, and H513 together coordinate K(+).

The protein belongs to the IMPDH/GMPR family. As to quaternary structure, homotetramer. Requires K(+) as cofactor.

The catalysed reaction is IMP + NAD(+) + H2O = XMP + NADH + H(+). The protein operates within purine metabolism; XMP biosynthesis via de novo pathway; XMP from IMP: step 1/1. Its activity is regulated as follows. Mycophenolic acid (MPA) is a non-competitive inhibitor that prevents formation of the closed enzyme conformation by binding to the same site as the amobile flap. In contrast, mizoribine monophosphate (MZP) is a competitive inhibitor that induces the closed conformation. MPA is a potent inhibitor of mammalian IMPDHs but a poor inhibitor of the bacterial enzymes. MZP is a more potent inhibitor of bacterial IMPDH. Functionally, catalyzes the conversion of inosine 5'-phosphate (IMP) to xanthosine 5'-phosphate (XMP), the first committed and rate-limiting step in the de novo synthesis of guanine nucleotides, and therefore plays an important role in the regulation of cell growth. This Mycobacterium leprae (strain TN) protein is Inosine-5'-monophosphate dehydrogenase.